The following is a 257-amino-acid chain: UPF0246 protein Daro_2893 (257 aa).

Belongs to the UPF0246 family.

This is UPF0246 protein Daro_2893 from Dechloromonas aromatica (strain RCB).